The chain runs to 243 residues: Proteasome subunit beta 1 (243 aa).

Residues 1 to 14 (MRAPQHNSDFSRTV) are compositionally biased toward polar residues. Positions 1–34 (MRAPQHNSDFSRTVDQLADDPNPYEPEIGSMPQN) are disordered. Residues 1-48 (MRAPQHNSDFSRTVDQLADDPNPYEPEIGSMPQNDLTRADLDNVNKTG) constitute a propeptide, removed in mature form; by autocatalysis. The active-site Nucleophile is Thr-49.

Belongs to the peptidase T1B family. As to quaternary structure, the 20S proteasome core is composed of 14 alpha and 14 beta subunits that assemble into four stacked heptameric rings, resulting in a barrel-shaped structure. The two inner rings, each composed of seven catalytic beta subunits, are sandwiched by two outer rings, each composed of seven alpha subunits. The catalytic chamber with the active sites is on the inside of the barrel. Has a gated structure, the ends of the cylinder being occluded by the N-termini of the alpha-subunits. Is capped at one or both ends by the proteasome regulatory ATPase, PAN.

It is found in the cytoplasm. The enzyme catalyses Cleavage of peptide bonds with very broad specificity.. With respect to regulation, the formation of the proteasomal ATPase PAN-20S proteasome complex, via the docking of the C-termini of PAN into the intersubunit pockets in the alpha-rings, triggers opening of the gate for substrate entry. Interconversion between the open-gate and close-gate conformations leads to a dynamic regulation of the 20S proteasome proteolysis activity. Functionally, component of the proteasome core, a large protease complex with broad specificity involved in protein degradation. In Haloterrigena turkmenica (strain ATCC 51198 / DSM 5511 / JCM 9101 / NCIMB 13204 / VKM B-1734 / 4k) (Halococcus turkmenicus), this protein is Proteasome subunit beta 1.